Reading from the N-terminus, the 929-residue chain is Protocadherin gamma-B7 (929 aa).

Residues Met1–Cys30 form the signal peptide. 6 consecutive Cadherin domains span residues Glu31–Phe133, Arg134–Phe242, Ser243–Ile347, Ile348–Phe452, Gly453–Val562, and Asp570–Phe675. Topologically, residues Glu31–Tyr691 are extracellular. Asn419 and Asn545 each carry an N-linked (GlcNAc...) asparagine glycan. The helical transmembrane segment at Leu692–Ala712 threads the bilayer. The Cytoplasmic segment spans residues Leu713–Lys929. 2 disordered regions span residues Gln806–Asn838 and Ala899–Lys929. A compositionally biased stretch (polar residues) spans Ala807 to Asn838. Residues Asn919–Lys929 are compositionally biased toward basic residues.

The protein localises to the cell membrane. Its function is as follows. Potential calcium-dependent cell-adhesion protein. May be involved in the establishment and maintenance of specific neuronal connections in the brain. The sequence is that of Protocadherin gamma-B7 (PCDHGB7) from Homo sapiens (Human).